The chain runs to 454 residues: tRNA modification GTPase MnmE (454 aa).

Residues Arg-26, Glu-84, and Lys-123 each contribute to the (6S)-5-formyl-5,6,7,8-tetrahydrofolate site. One can recognise a TrmE-type G domain in the interval Gly-219–Gly-378. Asn-229 serves as a coordination point for K(+). GTP is bound by residues Asn-229–Ser-234, Thr-248–Thr-254, and Asp-273–Gly-276. Ser-233 contacts Mg(2+). Residues Thr-248, Ile-250, and Thr-253 each contribute to the K(+) site. Thr-254 provides a ligand contact to Mg(2+). Residue Lys-454 coordinates (6S)-5-formyl-5,6,7,8-tetrahydrofolate.

The protein belongs to the TRAFAC class TrmE-Era-EngA-EngB-Septin-like GTPase superfamily. TrmE GTPase family. Homodimer. Heterotetramer of two MnmE and two MnmG subunits. It depends on K(+) as a cofactor.

It localises to the cytoplasm. Exhibits a very high intrinsic GTPase hydrolysis rate. Involved in the addition of a carboxymethylaminomethyl (cmnm) group at the wobble position (U34) of certain tRNAs, forming tRNA-cmnm(5)s(2)U34. The sequence is that of tRNA modification GTPase MnmE from Acinetobacter baumannii (strain AYE).